Consider the following 384-residue polypeptide: Branched-chain-amino-acid aminotransferase 1, mitochondrial (384 aa).

The N-terminal 18 residues, 1–18 (MALRRCLPQYSTTSSYLS), are a transit peptide targeting the mitochondrion. Lysine 231 bears the N6-(pyridoxal phosphate)lysine mark.

It belongs to the class-IV pyridoxal-phosphate-dependent aminotransferase family. Pyridoxal 5'-phosphate is required as a cofactor.

The protein localises to the mitochondrion. The enzyme catalyses L-leucine + 2-oxoglutarate = 4-methyl-2-oxopentanoate + L-glutamate. The catalysed reaction is L-isoleucine + 2-oxoglutarate = (S)-3-methyl-2-oxopentanoate + L-glutamate. It carries out the reaction L-valine + 2-oxoglutarate = 3-methyl-2-oxobutanoate + L-glutamate. It participates in amino-acid degradation; L-leucine degradation; 4-methyl-2-oxopentanoate from L-leucine (aminotransferase route): step 1/1. The protein operates within amino-acid degradation; L-valine degradation. Converts 2-oxo acids to branched-chain amino acids. Acts on leucine, isoleucine and valine. The chain is Branched-chain-amino-acid aminotransferase 1, mitochondrial (BCAT1) from Arabidopsis thaliana (Mouse-ear cress).